The chain runs to 453 residues: MDRRIFGLENEYGVTCTFRGQRRLSPDEVARYLFRRVVSWGRSSNVFLRNGARLYLDVGSHPEYATPECDNVTELVTHDKAGERILEGLLVDAERRLHEEGIAGDVYLFKNNTDSAGNSYGCHENYLVARHGEFSRLADILIPFLVTRQLICGAGKVLQTPRGAVYCVSQRAEHIWEGVSSATTRSRPIINTRDEPHADAERYRRLHVIVGDSNMSETTMLLKVGATDLVLRMIEAGTVMRDLTLENPIRAIREVSHDLTGQRKVRLASGREASAIEVQREYYEKAVDFVERRGIRTGTVDQVLELWGRTLDAVEAQDLDRIDTEIDWVMKYKLIERYRAKHNMTMSNPRVAQIDLAYHDIHRRRGLFYLLERKGQTARICNDLKIFEGKSVPPQTTRARLRGDFIRRAQEQRRDFTVDWVHLKLNDQAQRTVLCKDPFRSVDERVEKLIAGM.

Residue E9 participates in Mg(2+) binding. R53 serves as a coordination point for ATP. Y55 contacts Mg(2+). The Proton acceptor role is filled by D57. E63 contributes to the Mg(2+) binding site. ATP contacts are provided by T66 and W420.

This sequence belongs to the Pup ligase/Pup deamidase family. Pup-conjugating enzyme subfamily.

The catalysed reaction is ATP + [prokaryotic ubiquitin-like protein]-L-glutamate + [protein]-L-lysine = ADP + phosphate + N(6)-([prokaryotic ubiquitin-like protein]-gamma-L-glutamyl)-[protein]-L-lysine.. The protein operates within protein degradation; proteasomal Pup-dependent pathway. It participates in protein modification; protein pupylation. Functionally, catalyzes the covalent attachment of the prokaryotic ubiquitin-like protein modifier Pup to the proteasomal substrate proteins, thereby targeting them for proteasomal degradation. This tagging system is termed pupylation. The ligation reaction involves the side-chain carboxylate of the C-terminal glutamate of Pup and the side-chain amino group of a substrate lysine. The sequence is that of Pup--protein ligase from Streptomyces griseus subsp. griseus (strain JCM 4626 / CBS 651.72 / NBRC 13350 / KCC S-0626 / ISP 5235).